Consider the following 246-residue polypeptide: Acetoacetate decarboxylase (246 aa).

Catalysis depends on lysine 115, which acts as the Schiff-base intermediate with acetoacetate.

Belongs to the ADC family.

The catalysed reaction is acetoacetate + H(+) = acetone + CO2. In terms of biological role, catalyzes the conversion of acetoacetate to acetone and carbon dioxide. The sequence is that of Acetoacetate decarboxylase from Clostridium beijerinckii (Clostridium MP).